Reading from the N-terminus, the 466-residue chain is 3-isopropylmalate dehydratase large subunit (466 aa).

The [4Fe-4S] cluster site is built by C347, C407, and C410.

Belongs to the aconitase/IPM isomerase family. LeuC type 1 subfamily. Heterodimer of LeuC and LeuD. [4Fe-4S] cluster serves as cofactor.

The enzyme catalyses (2R,3S)-3-isopropylmalate = (2S)-2-isopropylmalate. Its pathway is amino-acid biosynthesis; L-leucine biosynthesis; L-leucine from 3-methyl-2-oxobutanoate: step 2/4. Catalyzes the isomerization between 2-isopropylmalate and 3-isopropylmalate, via the formation of 2-isopropylmaleate. The chain is 3-isopropylmalate dehydratase large subunit from Vibrio vulnificus (strain CMCP6).